The chain runs to 138 residues: Cytochrome b5 (138 aa).

Positions 14 to 90 (GRYYRLEEVQ…SETFIIGELH (77 aa)) constitute a Cytochrome b5 heme-binding domain. Heme contacts are provided by His49 and His73. A helical membrane pass occupies residues 114 to 136 (SWSNWVIPAIAAIIVALMYRSYM).

Belongs to the cytochrome b5 family.

The protein resides in the endoplasmic reticulum membrane. It is found in the microsome membrane. Functionally, cytochrome b5 is a membrane-bound hemoprotein functioning as an electron carrier for several membrane-bound oxygenases. This is Cytochrome b5 (CYB5A) from Gallus gallus (Chicken).